We begin with the raw amino-acid sequence, 513 residues long: MADELGTTEREIIAQRLKKAEALRALGVNPFGNGWQPRHLADELLRHYGDQPAEEIAKDPGDWSLAGRVLAVRSFGKAAFLRVRDRSAELQVWVKKDRVGEQAFEVFKLLDIGDIVGAEGPATRTKTGELTLEARTFTILTKATRPLPEKWHGLTDVEQRYRQRYVDLVVTPGVREAFVKRARIVSGIRRFLDARGYLEVETPTLHKPEEAGGAAARPFETHHNALDLDLKLRIATELHLKRLVVGGLDRVYEIGRIWRNEGIDRRHNPEFTSIEFYQAYATHEDLMRLTEELMHRLAVEVTGGPVVTFQGQAIDLTPPFPRVSMLEVGARALGLSPDDALAGRGLAEALSRAAARENDSEDAWKLEQAAKKTPGEAVALAFEIFGEPQLPKDRPAFVVDFPLETSPLSRRRDADPRLVDRFELFAAGMELANAFSELNDPADQRARFEAQMRAKAAGDEEAMPYDEDFVRALEHGMPPTAGEGIGIDRLAMLFTDSASIRDVILFPLLKSRD.

Mg(2+) is bound by residues E423 and E430.

It belongs to the class-II aminoacyl-tRNA synthetase family. As to quaternary structure, homodimer. It depends on Mg(2+) as a cofactor.

Its subcellular location is the cytoplasm. The catalysed reaction is tRNA(Lys) + L-lysine + ATP = L-lysyl-tRNA(Lys) + AMP + diphosphate. This is Lysine--tRNA ligase from Anaeromyxobacter dehalogenans (strain 2CP-1 / ATCC BAA-258).